The chain runs to 204 residues: Guanylate kinase (204 aa).

The Guanylate kinase-like domain maps to 16-196 (AKVIIFSAPS…AKAHALKVIK (181 aa)). Residue 23 to 30 (APSGSGKS) coordinates ATP.

This sequence belongs to the guanylate kinase family.

It localises to the cytoplasm. It carries out the reaction GMP + ATP = GDP + ADP. Functionally, essential for recycling GMP and indirectly, cGMP. This chain is Guanylate kinase, found in Bacteroides fragilis (strain ATCC 25285 / DSM 2151 / CCUG 4856 / JCM 11019 / LMG 10263 / NCTC 9343 / Onslow / VPI 2553 / EN-2).